A 170-amino-acid polypeptide reads, in one-letter code: Acetyl-CoA decarbonylase/synthase complex subunit epsilon 2 (170 aa).

This sequence belongs to the CdhB family. In terms of assembly, heterotetramer of two alpha and two epsilon subunits. The ACDS complex is made up of alpha, epsilon, beta, gamma and delta subunits with a probable stoichiometry of (alpha(2)epsilon(2))(4)-beta(8)-(gamma(1)delta(1))(8).

It participates in one-carbon metabolism; methanogenesis from acetate. In terms of biological role, part of a complex that catalyzes the reversible cleavage of acetyl-CoA, allowing growth on acetate as sole source of carbon and energy. The alpha-epsilon subcomponent functions as a carbon monoxide dehydrogenase. The precise role of the epsilon subunit is unclear; it may have a stabilizing role within the alpha(2)epsilon(2) component and/or be involved in electron transfer to FAD during a potential FAD-mediated CO oxidation. This is Acetyl-CoA decarbonylase/synthase complex subunit epsilon 2 (cdhB2) from Methanosarcina acetivorans (strain ATCC 35395 / DSM 2834 / JCM 12185 / C2A).